The following is a 290-amino-acid chain: Undecaprenyl-diphosphatase (290 aa).

Transmembrane regions (helical) follow at residues 39 to 59, 85 to 105, 118 to 138, 202 to 222, 230 to 250, and 261 to 281; these read PGAAFTAISQIGTEAAVLIYF, AQMGWLVIVGSIPIGVLGITL, LIATTLIVMGIVLGVADRLAA, SFLLAIPAVLASGAYELKDVG, PTIFATLVAFFVGYAVIAWFM, and FVIYRILLGVVLFILIWAGVL.

Belongs to the UppP family.

The protein localises to the cell membrane. It catalyses the reaction di-trans,octa-cis-undecaprenyl diphosphate + H2O = di-trans,octa-cis-undecaprenyl phosphate + phosphate + H(+). In terms of biological role, catalyzes the dephosphorylation of undecaprenyl diphosphate (UPP). Confers resistance to bacitracin. The polypeptide is Undecaprenyl-diphosphatase (Streptomyces griseus subsp. griseus (strain JCM 4626 / CBS 651.72 / NBRC 13350 / KCC S-0626 / ISP 5235)).